The primary structure comprises 181 residues: UPF0398 protein LMHCC_0668 (181 aa).

The protein belongs to the UPF0398 family.

The protein is UPF0398 protein LMHCC_0668 of Listeria monocytogenes serotype 4a (strain HCC23).